Consider the following 367-residue polypeptide: MVQVPIKPTPQTPAPTTAIPNGPALEAWLNDWAQRIINGDRLTRTEALRLTAITGPENILKLCAAADLIRHECCGNTVDLCSIVNVKSGSCSENCSFCSQSAHHPGEDSPVYGLKTAEEIIEQAKAAEAAGAKRFCLVSQGRGIKYNSPRDTEFEQILETVRRIQAETAIKPCCALGEVTPEQAQQLREAGVTRYNHNLEASENFFPDIVTTHSWQDRVETIKNLKAAGIQACSGGIMGLGESWEDRVDLAIALRDLEVESVPLNLLNPRQGTPLGSNDRLDVYEALKCMAIFRFILPEQIIRYAGGREAVMGELQHLGLKAGINAMLIGHYLTTMGQPPEQDQAMLKSLGLQGGEAPIPGQYSAAQ.

The Radical SAM core domain occupies 73-308 (CCGNTVDLCS…EQIIRYAGGR (236 aa)). Residues C91, C95, and C98 each coordinate [4Fe-4S] cluster. C136, C173, C233, and R303 together coordinate [2Fe-2S] cluster.

It belongs to the radical SAM superfamily. Biotin synthase family. As to quaternary structure, homodimer. It depends on [4Fe-4S] cluster as a cofactor. [2Fe-2S] cluster is required as a cofactor.

The enzyme catalyses (4R,5S)-dethiobiotin + (sulfur carrier)-SH + 2 reduced [2Fe-2S]-[ferredoxin] + 2 S-adenosyl-L-methionine = (sulfur carrier)-H + biotin + 2 5'-deoxyadenosine + 2 L-methionine + 2 oxidized [2Fe-2S]-[ferredoxin]. It participates in cofactor biosynthesis; biotin biosynthesis; biotin from 7,8-diaminononanoate: step 2/2. Catalyzes the conversion of dethiobiotin (DTB) to biotin by the insertion of a sulfur atom into dethiobiotin via a radical-based mechanism. The sequence is that of Biotin synthase from Picosynechococcus sp. (strain ATCC 27264 / PCC 7002 / PR-6) (Agmenellum quadruplicatum).